Reading from the N-terminus, the 1598-residue chain is Pentafunctional AROM polypeptide (1598 aa).

Residues M1–N384 are 3-dehydroquinate synthase. Residues D44–N46, E81–K84, G114–V116, and D119 each bind NAD(+). R130 is a 7-phospho-2-dehydro-3-deoxy-D-arabino-heptonate binding site. T139–T140 contacts NAD(+). D146 and K152 together coordinate 7-phospho-2-dehydro-3-deoxy-D-arabino-heptonate. NAD(+) is bound at residue K161. N162 is a 7-phospho-2-dehydro-3-deoxy-D-arabino-heptonate binding site. NAD(+) is bound by residues F179–T182 and N190. E194 contributes to the Zn(2+) binding site. 7-phospho-2-dehydro-3-deoxy-D-arabino-heptonate-binding positions include E194–K197 and K250. Residue E260 is the Proton acceptor; for 3-dehydroquinate synthase activity of the active site. Residues R264 to N268 and H271 each bind 7-phospho-2-dehydro-3-deoxy-D-arabino-heptonate. H271 contacts Zn(2+). H275 acts as the Proton acceptor; for 3-dehydroquinate synthase activity in catalysis. 7-phospho-2-dehydro-3-deoxy-D-arabino-heptonate-binding residues include H287 and K356. H287 contacts Zn(2+). The interval V397–V842 is EPSP synthase. C824 functions as the For EPSP synthase activity in the catalytic mechanism. Positions A867–S1059 are shikimate kinase. Position 874–881 (G874–T881) interacts with ATP. A 3-dehydroquinase region spans residues L1060–E1280. H1183 (proton acceptor; for 3-dehydroquinate dehydratase activity) is an active-site residue. Residue K1211 is the Schiff-base intermediate with substrate; for 3-dehydroquinate dehydratase activity of the active site. The segment at A1293 to S1598 is shikimate dehydrogenase.

This sequence in the N-terminal section; belongs to the sugar phosphate cyclases superfamily. Dehydroquinate synthase family. The protein in the 2nd section; belongs to the EPSP synthase family. In the 3rd section; belongs to the shikimate kinase family. It in the 4th section; belongs to the type-I 3-dehydroquinase family. This sequence in the C-terminal section; belongs to the shikimate dehydrogenase family. In terms of assembly, homodimer. It depends on Zn(2+) as a cofactor.

The protein localises to the cytoplasm. The enzyme catalyses 7-phospho-2-dehydro-3-deoxy-D-arabino-heptonate = 3-dehydroquinate + phosphate. The catalysed reaction is 3-dehydroquinate = 3-dehydroshikimate + H2O. It catalyses the reaction shikimate + NADP(+) = 3-dehydroshikimate + NADPH + H(+). It carries out the reaction shikimate + ATP = 3-phosphoshikimate + ADP + H(+). The enzyme catalyses 3-phosphoshikimate + phosphoenolpyruvate = 5-O-(1-carboxyvinyl)-3-phosphoshikimate + phosphate. It functions in the pathway metabolic intermediate biosynthesis; chorismate biosynthesis; chorismate from D-erythrose 4-phosphate and phosphoenolpyruvate: step 2/7. It participates in metabolic intermediate biosynthesis; chorismate biosynthesis; chorismate from D-erythrose 4-phosphate and phosphoenolpyruvate: step 3/7. Its pathway is metabolic intermediate biosynthesis; chorismate biosynthesis; chorismate from D-erythrose 4-phosphate and phosphoenolpyruvate: step 4/7. The protein operates within metabolic intermediate biosynthesis; chorismate biosynthesis; chorismate from D-erythrose 4-phosphate and phosphoenolpyruvate: step 5/7. It functions in the pathway metabolic intermediate biosynthesis; chorismate biosynthesis; chorismate from D-erythrose 4-phosphate and phosphoenolpyruvate: step 6/7. The AROM polypeptide catalyzes 5 consecutive enzymatic reactions in prechorismate polyaromatic amino acid biosynthesis. The polypeptide is Pentafunctional AROM polypeptide (Paracoccidioides lutzii (strain ATCC MYA-826 / Pb01) (Paracoccidioides brasiliensis)).